A 269-amino-acid polypeptide reads, in one-letter code: Probable ribosomal RNA small subunit methyltransferase A (269 aa).

Residues His23, Leu25, Gly50, Glu71, Asp95, and Asn110 each coordinate S-adenosyl-L-methionine.

The protein belongs to the class I-like SAM-binding methyltransferase superfamily. rRNA adenine N(6)-methyltransferase family. RsmA subfamily.

It localises to the cytoplasm. Its function is as follows. Specifically dimethylates two adjacent adenosines in the loop of a conserved hairpin near the 3'-end of 16S rRNA in the 30S particle. May play a critical role in biogenesis of 30S subunits. The chain is Probable ribosomal RNA small subunit methyltransferase A from Pyrococcus abyssi (strain GE5 / Orsay).